Reading from the N-terminus, the 278-residue chain is Shikimate dehydrogenase (NADP(+)) (278 aa).

Residues 23–25 (SRS) and threonine 70 each bind shikimate. Lysine 74 acts as the Proton acceptor in catalysis. NADP(+) is bound at residue glutamate 86. Asparagine 95 and aspartate 110 together coordinate shikimate. NADP(+)-binding positions include 135-139 (GAGGA), 159-164 (NRTKEK), and methionine 224. Tyrosine 226 lines the shikimate pocket. Glycine 248 is an NADP(+) binding site.

It belongs to the shikimate dehydrogenase family. In terms of assembly, homodimer.

The enzyme catalyses shikimate + NADP(+) = 3-dehydroshikimate + NADPH + H(+). It functions in the pathway metabolic intermediate biosynthesis; chorismate biosynthesis; chorismate from D-erythrose 4-phosphate and phosphoenolpyruvate: step 4/7. Functionally, involved in the biosynthesis of the chorismate, which leads to the biosynthesis of aromatic amino acids. Catalyzes the reversible NADPH linked reduction of 3-dehydroshikimate (DHSA) to yield shikimate (SA). This is Shikimate dehydrogenase (NADP(+)) from Alcanivorax borkumensis (strain ATCC 700651 / DSM 11573 / NCIMB 13689 / SK2).